Consider the following 195-residue polypeptide: HTH-type transcriptional regulator BetI (195 aa).

Residues 8–68 (EIRRAQLIDA…ATMRHVLRDL (61 aa)) enclose the HTH tetR-type domain. Residues 31-50 (TLASVAQRANISTGIVSHYF) constitute a DNA-binding region (H-T-H motif).

Its pathway is amine and polyamine biosynthesis; betaine biosynthesis via choline pathway [regulation]. Its function is as follows. Repressor involved in the biosynthesis of the osmoprotectant glycine betaine. It represses transcription of the choline transporter BetT and the genes of BetAB involved in the synthesis of glycine betaine. The chain is HTH-type transcriptional regulator BetI from Burkholderia thailandensis (strain ATCC 700388 / DSM 13276 / CCUG 48851 / CIP 106301 / E264).